The following is a 399-amino-acid chain: Brefeldin A resistance protein (399 aa).

3 stretches are compositionally biased toward basic and acidic residues: residues 1–31 (MTSK…DETS), 49–69 (SKSE…KETT), and 101–130 (KVEE…KESA). Disordered regions lie at residues 1–173 (MTSK…FGAF) and 191–269 (KKFA…SEII). Over residues 138–157 (SPFSQFASFSNASSPFSNVS) the composition is skewed to low complexity. Basic and acidic residues-rich tracts occupy residues 205 to 217 (SGKE…KSSE) and 241 to 252 (TKSEPKEADKGS). Residues 253-263 (GDSTKSTMHQL) are compositionally biased toward polar residues. The RanBD1 domain maps to 256–396 (TKSTMHQLSD…VLEAIPKGGR (141 aa)).

Phosphorylated.

It is found in the nucleus. In Schizosaccharomyces pombe (strain 972 / ATCC 24843) (Fission yeast), this protein is Brefeldin A resistance protein (hba1).